A 319-amino-acid polypeptide reads, in one-letter code: Malate dehydrogenase (319 aa).

Residues 10–15 and Asp34 contribute to the NAD(+) site; that span reads GAGNIG. Substrate-binding residues include Arg83 and Arg89. NAD(+) contacts are provided by residues Asn96 and 119–121; that span reads ITN. Positions 121 and 152 each coordinate substrate. The active-site Proton acceptor is His176.

The protein belongs to the LDH/MDH superfamily. MDH type 3 family.

It catalyses the reaction (S)-malate + NAD(+) = oxaloacetate + NADH + H(+). Catalyzes the reversible oxidation of malate to oxaloacetate. This chain is Malate dehydrogenase, found in Francisella tularensis subsp. tularensis (strain FSC 198).